The sequence spans 287 residues: Glutamate racemase (287 aa).

Positions 1–15 (MATKPQDANTTSREA) are enriched in polar residues. Residues 1–25 (MATKPQDANTTSREAITSKADSPPR) are disordered. Residues 32 to 33 (DS) and 64 to 65 (YG) each bind substrate. The active-site Proton donor/acceptor is Cys-96. 97–98 (NT) contacts substrate. Cys-208 serves as the catalytic Proton donor/acceptor. 209–210 (TH) contacts substrate.

This sequence belongs to the aspartate/glutamate racemases family.

It catalyses the reaction L-glutamate = D-glutamate. Its pathway is cell wall biogenesis; peptidoglycan biosynthesis. Functionally, provides the (R)-glutamate required for cell wall biosynthesis. This is Glutamate racemase from Yersinia pseudotuberculosis serotype O:1b (strain IP 31758).